The primary structure comprises 573 residues: Patellin-1 (573 aa).

2 disordered regions span residues 1-74 and 111-202; these read MAQE…SVKE and REFT…DGTK. A2 is modified (N-acetylalanine). Over residues 18-28 the composition is skewed to basic and acidic residues; sequence VKEKPITDKEV. T29 is modified (phosphothreonine). The segment covering 35 to 74 has biased composition (basic and acidic residues); it reads AEKEEVAAPVSDEKAVPEKEVTPEKEAPAAEAEKSVSVKE. A coiled-coil region spans residues 89–157; the sequence is AEEVQKKALE…TTEVKVEEEK (69 aa). T118 carries the post-translational modification Phosphothreonine. 2 stretches are compositionally biased toward basic and acidic residues: residues 120-169 and 176-190; these read VKEE…EKSS and TKSE…EVTT. Residue S195 is modified to Phosphoserine. A Glycyl lysine isopeptide (Lys-Gly) (interchain with G-Cter in ubiquitin) cross-link involves residue K285. Residues 295 to 468 form the CRAL-TRIO domain; sequence SGEEVSEFEK…KYGGLSKDTP (174 aa). In terms of domain architecture, GOLD spans 471–572; the sequence is EETITEAIVK…KKKVLYRFKT (102 aa).

It belongs to the patellin family. Interacts with the deubiquitinating enzyme AMSH3. In terms of tissue distribution, expressed ubiquitously with higher levels in expanding roots and leaves (at protein level).

It localises to the membrane. The protein localises to the cytoplasm. Its function is as follows. Carrier protein that may be involved in membrane-trafficking events associated with cell plate formation during cytokinesis. Binds to some hydrophobic molecules and promotes their transfer between the different cellular sites. Binds to phosphoinositides with a preference for PtdIns(5)P, PtdIns(4,5)P2 and PtdIns(3)P. The polypeptide is Patellin-1 (PATL1) (Arabidopsis thaliana (Mouse-ear cress)).